The chain runs to 2103 residues: Orsellinic acid synthase (2103 aa).

The tract at residues 17 to 232 (DAVHDLNVRS…KRPELAHATI (216 aa)) is N-terminal acylcarrier protein transacylase domain (SAT). One can recognise a Ketosynthase family 3 (KS3) domain in the interval 348 to 782 (ADAIAVVGMS…GGNVSMLLQD (435 aa)). Residues Cys525, His660, and His702 each act as for beta-ketoacyl synthase activity in the active site. A malonyl-CoA:ACP transacylase (MAT) domain region spans residues 881-1197 (VFTFTGQGAQ…RRGGDDWQSV (317 aa)). Ser973 acts as the For acyl/malonyl transferase activity in catalysis. The tract at residues 1272 to 1409 (HAVEKLQREE…GQPDSAVRRD (138 aa)) is N-terminal hotdog fold. Residues 1272–1582 (HAVEKLQREE…FKKLERDFFA (311 aa)) enclose the PKS/mFAS DH domain. The tract at residues 1303–1579 (GHVVDESAIC…DICFKKLERD (277 aa)) is product template (PT) domain. The active-site Proton acceptor; for dehydratase activity is His1304. The C-terminal hotdog fold stretch occupies residues 1433–1582 (VHAMDTALFY…FKKLERDFFA (150 aa)). Asp1493 acts as the Proton donor; for dehydratase activity in catalysis. The segment at 1592–1638 (STKPVAAAPAKSMAKRARQLAPSPSPSSSSGSNTPMSRSPTPSSVSD) is disordered. Composition is skewed to low complexity over residues 1594–1603 (KPVAAAPAKS) and 1617–1631 (PSSS…SRSP). Carrier domains follow at residues 1640–1716 (VDLG…GGSA) and 1741–1815 (PAPS…DDDA). Ser1676 bears the O-(pantetheine 4'-phosphoryl)serine mark. The segment at 1722-1743 (EDITKPTPSPEQTQARKQGPAP) is disordered. Residue Ser1775 is modified to O-(pantetheine 4'-phosphoryl)serine. Positions 1809 to 1838 (EALDDDAEEESAPAQTSTNPAKETTIDSSR) are disordered. Residues 1810 to 1819 (ALDDDAEEES) show a composition bias toward acidic residues. Polar residues predominate over residues 1823–1836 (QTSTNPAKETTIDS). Residues 1849 to 2082 (ASYIHLKALP…TVNGDHFSMM (234 aa)) are thioesterase (TE) domain.

The enzyme catalyses 3 malonyl-CoA + acetyl-CoA + 2 H(+) = orsellinate + 3 CO2 + 4 CoA. The protein operates within secondary metabolite biosynthesis. Its function is as follows. Non-reducing polyketide synthase; part of the gene cluster that mediates the biosynthesis of orsellinic acid, as well as of the cathepsin K inhibitors F9775 A and F9775 B. The non-reducing polyketide synthase orsA produces orsellinic acid by condensing acetyl-CoA with 3 malonyl-CoA units. Further modifications by the decarboxylase orsB and the tyrosinase-like protein orsC lead to the production of F9775 A and F9775 B. The functions of orsD and orsE remain unclear since only orsB and orsC are required to convert orsellinic acid into F9775 A and F9775 B. The protein is Orsellinic acid synthase of Emericella nidulans (strain FGSC A4 / ATCC 38163 / CBS 112.46 / NRRL 194 / M139) (Aspergillus nidulans).